A 283-amino-acid chain; its full sequence is NAD kinase (283 aa).

D68 (proton acceptor) is an active-site residue. Residues 68–69 (DG), 142–143 (ND), R153, D172, 183–188 (TAYSLS), and Q242 each bind NAD(+).

It belongs to the NAD kinase family. The cofactor is a divalent metal cation.

Its subcellular location is the cytoplasm. The catalysed reaction is NAD(+) + ATP = ADP + NADP(+) + H(+). Involved in the regulation of the intracellular balance of NAD and NADP, and is a key enzyme in the biosynthesis of NADP. Catalyzes specifically the phosphorylation on 2'-hydroxyl of the adenosine moiety of NAD to yield NADP. The chain is NAD kinase from Caldanaerobacter subterraneus subsp. tengcongensis (strain DSM 15242 / JCM 11007 / NBRC 100824 / MB4) (Thermoanaerobacter tengcongensis).